Consider the following 1498-residue polypeptide: Mitogen-activated protein kinase kinase kinase nsy-1 (1498 aa).

2 disordered regions span residues Met-1–Tyr-35 and Leu-190–Thr-209. Over residues Leu-22 to Thr-33 the composition is skewed to pro residues. The region spanning Ser-664–Ile-925 is the Protein kinase domain. Residues Leu-670 to Val-678 and Lys-693 each bind ATP. The active-site Proton acceptor is the Asp-790. The interval Ile-1022–Pro-1050 is disordered. The span at Ser-1031–Ser-1042 shows a compositional bias: low complexity. A coiled-coil region spans residues Ser-1276–Lys-1314. The tract at residues Gln-1461–Asn-1498 is disordered. Residues Arg-1469–His-1479 are compositionally biased toward basic and acidic residues.

This sequence belongs to the protein kinase superfamily. STE Ser/Thr protein kinase family. MAP kinase kinase kinase subfamily. In terms of assembly, interacts with unc-43. Interacts with sek-1. The cofactor is Mg(2+). Post-translationally, may be phosphorylated upon pathogenic bacterial infection. May be regulated by proteasomal degradation mediated by the E3-ubiquitin ligase rle-1. As to expression, expressed in intestine, hypodermis, rectal gland cell and neurons including sensory AWC neurons.

Its subcellular location is the cell projection. The protein localises to the axon. The protein resides in the perikaryon. It catalyses the reaction L-seryl-[protein] + ATP = O-phospho-L-seryl-[protein] + ADP + H(+). The enzyme catalyses L-threonyl-[protein] + ATP = O-phospho-L-threonyl-[protein] + ADP + H(+). Serine/threonine-protein kinase which, by phosphorylating and activating sek-1, plays an important role in the activation of the p38 pathway also composed of the downstream effectors sek-1 and pmk-1. Downstream of CaMKII unc-43 and adapter protein tir-1, plays a role in determining asymmetric cell fates in olfactory AWC neurons during neuronal development. Activation results in the repression of odorant receptor str-2 expression in one of the 2 AWC neurons. Involved in resistance to pathogenic Gram-positive and Gram-negative bacterial and fungal infection. Involved in resistance to the nematotoxic C.cinerea galectin Cgl2. Probably by activating the sek1/pmk-1/skn-1 pathway, involved in the up-regulation of gcs-1 and glutathione-S-transferase gst-4 expression upon bacterial infection. Probably downstream of tir-1 and nipi-3, required for the expression of antimicrobial peptide nlp-29 in the epidermis in response to fungal infection or physical injury. Plays a role in resistance to several environmental stresses including oxidative, protein misfolding (ER) and osmotic stresses, and DNA-damaging reagents. Plays a role in the stabilization of transcription factor rnt-1 in the intestine during oxidative stress. Involved in germline apoptosis induced by heavy metals, such as Cu(2+). In addition, plays a role in the up-regulation of gcs-1 upon arsenite treatment, most likely through activation of pmk-1, to confer protection against toxicity induced by heavy metals. Plays a role downstream of tir-1 in regulating susceptibility to anoxia. Involved in egg laying. This chain is Mitogen-activated protein kinase kinase kinase nsy-1, found in Caenorhabditis elegans.